The following is a 175-amino-acid chain: uncharacterized protein (175 aa).

The N-terminal 11 residues, 1–11, are a transit peptide targeting the mitochondrion; the sequence is METWRKGSFRN. Residues 29 to 48 form a disordered region; sequence QGSILSQASTAGGDHEEYSN.

The protein localises to the mitochondrion. This is an uncharacterized protein from Mus musculus (Mouse).